The following is a 504-amino-acid chain: Doublesex- and mab-3-related transcription factor A1 (504 aa).

Residues 1-13 are compositionally biased toward basic and acidic residues; it reads MERSQCGSRDRGV. Residues 1-27 form a disordered region; it reads MERSQCGSRDRGVSGRPHLAPGLVVAA. Residues 97-144 constitute a DNA-binding region (DM); sequence CARCRNHGVVSALKGHKRFCRWRDCACAKCTLIAERQRVMAAQVALRR. Disordered stretches follow at residues 170–192 and 266–307; these read GRAS…AAGA and SISE…NESE. A compositionally biased stretch (low complexity) spans 293 to 306; sequence RSLSSSDLESGNES. Positions 327–362 constitute a DMA domain; the sequence is RDPLDILTKIFPNYRRSRLEGILRFCKGDVVQAIEQ.

It belongs to the DMRT family. Expressed in liver, kidney, pancreas, prostate and weakly detected in testis and ovary.

Its subcellular location is the nucleus. The sequence is that of Doublesex- and mab-3-related transcription factor A1 (DMRTA1) from Homo sapiens (Human).